The following is a 344-amino-acid chain: L-rhamnose-proton symporter (344 aa).

A run of 10 helical transmembrane segments spans residues 4-24 (AITM…CFYA), 38-58 (WSVG…ALLL), 68-88 (FSLS…IGNI), 101-121 (MGIG…TPII), 137-157 (TLLG…AGQL), 175-195 (LVLA…MNAA), 214-234 (LPSY…FCFI), 259-279 (VLLS…YAWG), 290-310 (ISWM…GLVL), and 323-343 (VLSL…IGMA).

Belongs to the L-rhamnose transporter (TC 2.A.7.6) family.

It localises to the cell inner membrane. The catalysed reaction is L-rhamnopyranose(in) + H(+)(in) = L-rhamnopyranose(out) + H(+)(out). Its function is as follows. Uptake of L-rhamnose across the cytoplasmic membrane with the concomitant transport of protons into the cell (symport system). This Escherichia coli (strain ATCC 8739 / DSM 1576 / NBRC 3972 / NCIMB 8545 / WDCM 00012 / Crooks) protein is L-rhamnose-proton symporter.